Reading from the N-terminus, the 69-residue chain is U2-agatoxin-Ao1c (69 aa).

Residues 1–20 (MKAIISLLLISAMVFSMIEA) form the signal peptide. Residues 21–34 (VPVEEGLQLFEGER) constitute a propeptide that is removed on maturation. 3 cysteine pairs are disulfide-bonded: C36–C52, C43–C57, and C51–C67. Leucine amide is present on L68.

Belongs to the neurotoxin 01 (U2-agtx) family. As to expression, expressed by the venom gland.

The protein localises to the secreted. Functionally, insect active toxin causing rapid but reversible paralysis in crickets. No activity shown in mammals. Does not show effect on mammalian voltage-gated calcium channels. The chain is U2-agatoxin-Ao1c from Agelena orientalis (Funnel-web spider).